We begin with the raw amino-acid sequence, 1119 residues long: Putative transcription factor SEF1 (1119 aa).

Disordered regions lie at residues Met-1–Arg-70 and Gln-86–Lys-105. The span at Leu-47 to Arg-70 shows a compositional bias: polar residues. The segment at residues Cys-118 to Cys-148 is a DNA-binding region (zn(2)-C6 fungal-type). 5 disordered regions span residues Gln-236–Thr-290, Ser-306–Gln-335, Ala-894–Asn-913, Lys-926–Thr-962, and Ser-994–Asn-1018. A compositionally biased stretch (low complexity) spans Thr-243–Thr-260. Residues Gly-261–Ala-288 show a composition bias toward polar residues. Positions Ser-306–Thr-322 are enriched in low complexity. 3 stretches are compositionally biased toward polar residues: residues Gly-323–Gln-335, Arg-902–Asn-913, and Ser-931–Asn-942. The span at Ser-943–Ser-954 shows a compositional bias: low complexity.

It localises to the nucleus. Putative transcription factor. Suppresses the lethal phenotype of RPM2 deletion. The polypeptide is Putative transcription factor SEF1 (SEF1) (Kluyveromyces lactis (strain ATCC 8585 / CBS 2359 / DSM 70799 / NBRC 1267 / NRRL Y-1140 / WM37) (Yeast)).